We begin with the raw amino-acid sequence, 671 residues long: Protein cereblon (671 aa).

Residues 1–11 (MDGEEAADIDE) are compositionally biased toward acidic residues. 3 disordered regions span residues 1-59 (MDGE…VDGD), 104-130 (LTGT…PAQP), and 150-187 (GHNV…DAEA). Composition is skewed to low complexity over residues 39–51 (QQQQ…SSGE) and 105–115 (TGTTTPTPTAP). Residues 162–173 (SISSRHSGSDMS) are compositionally biased toward polar residues. Residues 309 to 537 (RMLIFMHQHI…IIGSTLKQES (229 aa)) enclose the Lon N-terminal domain. Residues 536–645 (ESLFYCRYCN…LAGSSVRIGK (110 aa)) form the CULT domain. Residues cysteine 541, cysteine 544, cysteine 610, and cysteine 613 each coordinate Zn(2+).

This sequence belongs to the CRBN family. Likely a component of a DCX (DDB1-CUL4-X-box) protein ligase complex. May interact with pic/DDB1. In terms of processing, ubiquitinated.

It is found in the nucleus. It participates in protein modification; protein ubiquitination. Its function is as follows. Substrate recognition component of a DCX (DDB1-CUL4-X-box) E3 protein ligase complex that mediates the ubiquitination and subsequent proteasomal degradation of target proteins. Has an essential role in mediating growth by negatively regulating insulin signaling. It also has a role in maintaining presynaptic function in the neuromuscular junction synapses of third-instar larvae. This Drosophila grimshawi (Hawaiian fruit fly) protein is Protein cereblon.